The primary structure comprises 117 residues: Large ribosomal subunit protein uL18 (117 aa).

The protein belongs to the universal ribosomal protein uL18 family. In terms of assembly, part of the 50S ribosomal subunit; part of the 5S rRNA/L5/L18/L25 subcomplex. Contacts the 5S and 23S rRNAs.

Its function is as follows. This is one of the proteins that bind and probably mediate the attachment of the 5S RNA into the large ribosomal subunit, where it forms part of the central protuberance. In Alkalilimnicola ehrlichii (strain ATCC BAA-1101 / DSM 17681 / MLHE-1), this protein is Large ribosomal subunit protein uL18.